Consider the following 222-residue polypeptide: MLWLLFFLVTAIHAELCQPGAENAFKVRLSIRTALGDKAYAWDTNEEYLFKAMVAFSMRKVPNREATEISHVLLCNVTQRVSFWFVVTDPSKNHTLPAVEVQSAIRMNKNRINNAFFLNDQTLEFLKIPSTLAPPMDPSVPIWIIIFGVIFCIIIVAIALLILSGIWQRRRKNKEPSEVDDAEDKCENMITIENGIPSDPLDMKGGHINDAFMTEDERLTPL.

Residues 1-14 (MLWLLFFLVTAIHA) form the signal peptide. Topologically, residues 15-141 (ELCQPGAENA…LAPPMDPSVP (127 aa)) are extracellular. The region spanning 21–222 (AENAFKVRLS…MTEDERLTPL (202 aa)) is the Collectrin-like domain. 2 N-linked (GlcNAc...) asparagine glycosylation sites follow: asparagine 76 and asparagine 93. The helical transmembrane segment at 142–162 (IWIIIFGVIFCIIIVAIALLI) threads the bilayer. At 163 to 222 (LSGIWQRRRKNKEPSEVDDAEDKCENMITIENGIPSDPLDMKGGHINDAFMTEDERLTPL) the chain is on the cytoplasmic side. Threonine 214 and threonine 220 each carry phosphothreonine.

The protein belongs to the CLTRN family. Monomer. Homodimer; dimerization prevents CLTRN cleavage by BACE2. Interacts with SLC6A18; this interaction regulates the trafficking of SLC6A18 to the cell membrane and its amino acid transporter activity. Interacts with SLC6A19; this interaction regulates the trafficking of SLC6A19 to the cell membrane and its amino acid transporter activity. Interacts with SNAPIN. Post-translationally, glycosylated. Glycosylation is required for plasma membrane localization and for its cleavage by BACE2. Proteolytically processed in pancreatic beta cells by BACE2 leading to the generation and extracellular release of soluble CLTRN, and a corresponding cell-associated C-terminal fragment which is later cleaved by gamma-secretase. This shedding process inactivates CLTRN. Three cleavage sites have been identified for BACE2, two clustered sites after Phe-116 and Leu-118 and a more membrane proximal site at Phe-125; the preferred BACE2 cleavage site seems to be between Phe-125 and Leu-126, Phe-116 and Leu-118 act as alternative sites. In terms of tissue distribution, kidney; collecting ducts. Pancreas; beta cells of islets.

It is found in the cell membrane. Plays an important role in amino acid transport by acting as binding partner of amino acid transporters SLC6A18 and SLC6A19, regulating their trafficking on the cell surface and their amino acid transporter activity. May also play a role in trafficking of amino acid transporters SLC3A1 and SLC7A9 to the renal cortical cell membrane. Regulator of SNARE complex function. Stimulator of beta cell replication. The polypeptide is Collectrin (Homo sapiens (Human)).